We begin with the raw amino-acid sequence, 498 residues long: MQHETLLHIQGIDKSFPGVKALSNACLSVYAGRAMALMGENGAGKSTLMKVLTGIYSKDAGTIEYLGKQVTFKGPKESQEAGISIIHQELNLVGNLTIAENIFLGREFVTPWGSIDWKKMHQEADKLLKRLGVSHSSHQLCSELSIGEQQMVEIAKALSFESKVIIMDEPTDALTDTETAALFKVIRELKAEKRGIVYISHRIKEIFEICDDVTVLRDGEFIGEKAVNVLDEDQLIEMMVGRRLDEQYPHLDKPRGELLLEVENLSGSGVHDVSFTLHRGEILGVSGLMGAGRTELMKVLYGALPRSSGKVRLAQQEIHNTCPQDGLNHGIVYISEDRKGDGLILGMSVKENMSLTALAYFSKSIQIDHKAEQLAVGDFITMFNIKTPSQEQQIGLLSGGNQQKVAIAKGLMTRPNVLILDEPTRGVDVGAKKEIYQLINEFKKEGLSIILVSSEMPEVLGMSDRILVMHEGRISAEFQRGEATQEKLLAAAIGKSAL.

2 consecutive ABC transporter domains span residues 7 to 243 (LHIQ…VGRR) and 254 to 496 (PRGE…IGKS). 39–46 (GENGAGKS) contacts ATP.

The protein belongs to the ABC transporter superfamily. Ribose importer (TC 3.A.1.2.1) family. As to quaternary structure, the complex is composed of an ATP-binding protein (RbsA), two transmembrane proteins (RbsC) and a solute-binding protein (RbsB).

The protein resides in the cell inner membrane. The enzyme catalyses D-ribose(out) + ATP + H2O = D-ribose(in) + ADP + phosphate + H(+). Part of the ABC transporter complex RbsABC involved in ribose import. Responsible for energy coupling to the transport system. The protein is Ribose import ATP-binding protein RbsA 1 of Pasteurella multocida (strain Pm70).